The chain runs to 329 residues: Isopenicillin N synthase (329 aa).

The isopenicillin N site is built by arginine 87, tyrosine 91, and tyrosine 189. N-[(5S)-5-amino-5-carboxypentanoyl]-L-cysteinyl-D-valine contacts are provided by arginine 87, tyrosine 91, tyrosine 189, histidine 212, and aspartate 214. Residues 180–286 (TLSAVTLIHY…RLSLPFFLHA (107 aa)) enclose the Fe2OG dioxygenase domain. Fe(2+) contacts are provided by histidine 212, aspartate 214, and histidine 268. Arginine 277 provides a ligand contact to 2-oxoglutarate. Position 279 (serine 279) interacts with isopenicillin N. Position 279 (serine 279) interacts with N-[(5S)-5-amino-5-carboxypentanoyl]-L-cysteinyl-D-valine.

It belongs to the iron/ascorbate-dependent oxidoreductase family. Requires Fe cation as cofactor. L-ascorbate is required as a cofactor.

It catalyses the reaction N-[(5S)-5-amino-5-carboxypentanoyl]-L-cysteinyl-D-valine + O2 = isopenicillin N + 2 H2O. Its pathway is antibiotic biosynthesis; penicillin G biosynthesis; penicillin G from L-alpha-aminoadipate and L-cysteine and L-valine: step 2/3. Its function is as follows. Removes, in the presence of oxygen, 4 hydrogen atoms from delta-L-(alpha-aminoadipyl)-L-cysteinyl-D-valine (ACV) to form the azetidinone and thiazolidine rings of isopenicillin. This Streptomyces griseus protein is Isopenicillin N synthase (pcbC).